Here is a 236-residue protein sequence, read N- to C-terminus: Peptidyl-prolyl cis-trans isomerase CYP21-4 (236 aa).

A helical; Signal-anchor for type II membrane protein membrane pass occupies residues 22–42 (ISISTIIVCNLVVAVVILSLV). The tract at residues 52-71 (SRNTIEHETRSQRFEDTNTA) is disordered. Residues 54–67 (NTIEHETRSQRFED) are compositionally biased toward basic and acidic residues. The PPIase cyclophilin-type domain maps to 82–232 (FADINTSKGL…SPIGITGVVL (151 aa)). Residue Asn86 is glycosylated (N-linked (GlcNAc...) asparagine).

Belongs to the cyclophilin-type PPIase family. As to expression, ubiquitous.

The protein localises to the membrane. The catalysed reaction is [protein]-peptidylproline (omega=180) = [protein]-peptidylproline (omega=0). PPIases accelerate the folding of proteins. It catalyzes the cis-trans isomerization of proline imidic peptide bonds in oligopeptides. In Arabidopsis thaliana (Mouse-ear cress), this protein is Peptidyl-prolyl cis-trans isomerase CYP21-4 (CYP21-4).